Consider the following 373-residue polypeptide: Transcription factor SPATULA (373 aa).

The span at 1–21 (MISQREEREEKKQRVMGDKKL) shows a compositional bias: basic and acidic residues. Disordered regions lie at residues 1–46 (MISQ…PSSS) and 141–210 (VQGN…KRRR). Positions 141-160 (VQGNSSGTRVSSSSVGASGN) are enriched in low complexity. The segment covering 161-177 (ETDEYDCESEEGGEAVV) has biased composition (acidic residues). Residues 182–191 (SSKSGPSSRS) are compositionally biased toward low complexity. A compositionally biased stretch (basic and acidic residues) spans 197 to 210 (RAAEVHNLSEKRRR). One can recognise a bHLH domain in the interval 197-246 (RAAEVHNLSEKRRRSRINEKMKALQSLIPNSNKTDKASMLDEAIEYLKQL).

Homodimer. Interacts with HEC1, HEC2 and HEC3. Binds to RGL2 and RGA. As to expression, expressed in lateral root caps, young leaves, stipules, maturing pith cells of the stem, differentiating vascular cells, shoot apical meristems and flowers.

The protein localises to the nucleus. Functionally, transcription factor that plays a role in floral organogenesis. Promotes the growth of carpel margins and of pollen tract tissues derived from them. The polypeptide is Transcription factor SPATULA (SPT) (Arabidopsis thaliana (Mouse-ear cress)).